Here is a 328-residue protein sequence, read N- to C-terminus: Nuclear transcription factor Y subunit A-8 (328 aa).

The interval 54–86 (KNISFQDQDSSSTLSSAQSSNDVTSSGDDNPSR) is disordered. Positions 57–75 (SFQDQDSSSTLSSAQSSND) are enriched in low complexity. Over residues 76–86 (VTSSGDDNPSR) the composition is skewed to polar residues. The short motif at 175 to 198 (FVNAKQFHAIMRRRQQRAKLEAQN) is the Subunit association domain (SAD) element. A DNA-binding region (NFYA/HAP2-type) is located at residues 205–230 (KPYLHESRHVHALKRPRGSGGRFLNT).

Belongs to the NFYA/HAP2 subunit family. In terms of assembly, heterotrimeric transcription factor composed of three components, NF-YA, NF-YB and NF-YC. NF-YB and NF-YC must interact and dimerize for NF-YA association and DNA binding. As to expression, expressed in the whole plant, except roots.

It localises to the nucleus. Stimulates the transcription of various genes by recognizing and binding to a CCAAT motif in promoters. This Arabidopsis thaliana (Mouse-ear cress) protein is Nuclear transcription factor Y subunit A-8 (NFYA8).